The following is a 259-amino-acid chain: MLTIADRTFDSHLIMGTGGATSMAMLEESLVASGTELTTVAMRRHAATTTGESVFDLLRRLDITPLPNTAGCRTARDAVITAKLAREALGTNWVKVEVIADEHTLLPDVVELIDACELLVAEGFVVLAYTSDDPVVARRLEDVGCAAVMPLGSPIGTGLGILNPHNIELICSRAGVPVLLDAGVGTASDAALAMELGCDGVLLASAVNRCQDPVAMARAMRYAVDAGRLARGAGRIPKREHAVASSTFDGLASWSDQVL.

Lys-95 acts as the Schiff-base intermediate with DXP in catalysis. 1-deoxy-D-xylulose 5-phosphate-binding positions include Gly-156, 182–183, and 204–205; these read AG and AS.

Belongs to the ThiG family. In terms of assembly, homotetramer. Forms heterodimers with either ThiH or ThiS.

It is found in the cytoplasm. The enzyme catalyses [ThiS sulfur-carrier protein]-C-terminal-Gly-aminoethanethioate + 2-iminoacetate + 1-deoxy-D-xylulose 5-phosphate = [ThiS sulfur-carrier protein]-C-terminal Gly-Gly + 2-[(2R,5Z)-2-carboxy-4-methylthiazol-5(2H)-ylidene]ethyl phosphate + 2 H2O + H(+). It participates in cofactor biosynthesis; thiamine diphosphate biosynthesis. Catalyzes the rearrangement of 1-deoxy-D-xylulose 5-phosphate (DXP) to produce the thiazole phosphate moiety of thiamine. Sulfur is provided by the thiocarboxylate moiety of the carrier protein ThiS. In vitro, sulfur can be provided by H(2)S. The sequence is that of Thiazole synthase from Corynebacterium efficiens (strain DSM 44549 / YS-314 / AJ 12310 / JCM 11189 / NBRC 100395).